The chain runs to 243 residues: GTP cyclohydrolase 1 type 2 (243 aa).

A divalent metal cation contacts are provided by H63, H64, D102, H209, and E213.

It belongs to the GTP cyclohydrolase I type 2/NIF3 family. As to quaternary structure, homohexamer.

The enzyme catalyses GTP + H2O = 7,8-dihydroneopterin 3'-triphosphate + formate + H(+). Its pathway is cofactor biosynthesis; 7,8-dihydroneopterin triphosphate biosynthesis; 7,8-dihydroneopterin triphosphate from GTP: step 1/1. In terms of biological role, converts GTP to dihydroneopterin triphosphate. This is GTP cyclohydrolase 1 type 2 from Helicobacter pylori (strain J99 / ATCC 700824) (Campylobacter pylori J99).